Consider the following 134-residue polypeptide: UPF0102 protein Dvul_2148 (134 aa).

The protein belongs to the UPF0102 family.

The protein is UPF0102 protein Dvul_2148 of Nitratidesulfovibrio vulgaris (strain DP4) (Desulfovibrio vulgaris).